A 471-amino-acid chain; its full sequence is Glutamate--tRNA ligase (471 aa).

Residues 9 to 19 (PSPTGYLHVGG) carry the 'HIGH' region motif. C98, C100, C125, and D127 together coordinate Zn(2+). Positions 237 to 241 (KLSKR) match the 'KMSKS' region motif. An ATP-binding site is contributed by K240.

The protein belongs to the class-I aminoacyl-tRNA synthetase family. Glutamate--tRNA ligase type 1 subfamily. As to quaternary structure, monomer. The cofactor is Zn(2+).

It localises to the cytoplasm. The catalysed reaction is tRNA(Glu) + L-glutamate + ATP = L-glutamyl-tRNA(Glu) + AMP + diphosphate. In terms of biological role, catalyzes the attachment of glutamate to tRNA(Glu) in a two-step reaction: glutamate is first activated by ATP to form Glu-AMP and then transferred to the acceptor end of tRNA(Glu). This chain is Glutamate--tRNA ligase, found in Yersinia enterocolitica serotype O:8 / biotype 1B (strain NCTC 13174 / 8081).